Reading from the N-terminus, the 265-residue chain is Glutamate racemase (265 aa).

Substrate contacts are provided by residues 12-13 and 44-45; these read DS and YG. Residue C75 is the Proton donor/acceptor of the active site. 76–77 provides a ligand contact to substrate; that stretch reads NT. Residue C186 is the Proton donor/acceptor of the active site. Residue 187–188 participates in substrate binding; sequence TH.

This sequence belongs to the aspartate/glutamate racemases family.

It carries out the reaction L-glutamate = D-glutamate. Its pathway is cell wall biogenesis; peptidoglycan biosynthesis. Provides the (R)-glutamate required for cell wall biosynthesis. In Pseudomonas aeruginosa (strain UCBPP-PA14), this protein is Glutamate racemase.